Consider the following 315-residue polypeptide: Olfactory receptor 56A3 (315 aa).

The Extracellular portion of the chain corresponds to 1–29 (MTTHRNDTLSTEASDFLLNCFVRSPSWQH). N-linked (GlcNAc...) asparagine glycosylation is present at N6. Residues 30–50 (WLSLPLSLLFLLAVGANTTLL) form a helical membrane-spanning segment. Residues 51–58 (MTIWLEAS) are Cytoplasmic-facing. The helical transmembrane segment at 59-79 (LHQPLYYLLSLLSLLDIVLCL) threads the bilayer. The Extracellular segment spans residues 80 to 103 (TVIPKVLTIFWFDLRPISFPACFL). A disulfide bridge connects residues C101 and C193. A helical membrane pass occupies residues 104–124 (QMYIMNCFLAMESCTFMVMAY). Over 125 to 143 (DRYVAICHPLRYPSIITDH) the chain is Cytoplasmic. The chain crosses the membrane as a helical span at residues 144-164 (FVVKAAMFILTRNVLMTLPIP). Topologically, residues 165-200 (ILSAQLRYCGRNVIENCICANMSVSRLSCDDVTINH) are extracellular. An N-linked (GlcNAc...) asparagine glycan is attached at N185. A helical membrane pass occupies residues 201–221 (LYQFAGGWTLLGSDLILIFLS). Topologically, residues 222–241 (YTFILRAVLRLKAEGAVAKA) are cytoplasmic. A helical transmembrane segment spans residues 242-262 (LSTCGSHFMLILFFSTILLVF). The Extracellular portion of the chain corresponds to 263-277 (VLTHVAKKKVSPDVP). Residues 278–298 (VLLNVLHHVIPAALNPIIYGV) form a helical membrane-spanning segment. At 299-315 (RTQEIKQGMQRLLKKGC) the chain is on the cytoplasmic side.

The protein belongs to the G-protein coupled receptor 1 family.

It is found in the cell membrane. In terms of biological role, odorant receptor. This chain is Olfactory receptor 56A3 (OR56A3), found in Homo sapiens (Human).